The chain runs to 147 residues: Hemoglobin subunit beta (147 aa).

Residues 3–147 enclose the Globin domain; sequence EWTDDERAII…VVSALGRQYH (145 aa). Heme b contacts are provided by His64 and His93.

This sequence belongs to the globin family. Heterotetramer of two alpha chains and two beta chains. Red blood cells.

Involved in oxygen transport from gills to the various peripheral tissues. The sequence is that of Hemoglobin subunit beta (hbb) from Merlangius merlangus (Whiting).